The primary structure comprises 251 residues: Hydroxyacylglutathione hydrolase (251 aa).

Zn(2+)-binding residues include His-53, His-55, Asp-57, His-58, His-110, Asp-127, and His-165.

It belongs to the metallo-beta-lactamase superfamily. Glyoxalase II family. As to quaternary structure, monomer. The cofactor is Zn(2+).

It carries out the reaction an S-(2-hydroxyacyl)glutathione + H2O = a 2-hydroxy carboxylate + glutathione + H(+). It functions in the pathway secondary metabolite metabolism; methylglyoxal degradation; (R)-lactate from methylglyoxal: step 2/2. Its function is as follows. Thiolesterase that catalyzes the hydrolysis of S-D-lactoyl-glutathione to form glutathione and D-lactic acid. This is Hydroxyacylglutathione hydrolase from Shigella dysenteriae serotype 1 (strain Sd197).